Reading from the N-terminus, the 346-residue chain is MDMLDPGLDPAASATAAAAASHDKGPEAEEGVELQEGGDGPGAEEQTAVAITSVQQAAFGDHNIQYQFRTETNGGQVTYRVVQVTDGQLDGQGDTAGAVSVVSTAAFAGGQQAVTQVGVDGAAQRPGPAAASVPPGPAAPFPLAVIQNPFSNGGSPAAEAVSGEARFAYFPASSVGDTTAVSVQTTDQSLQAGGQFYVMMTPQDVLQTGTQRTIAPRTHPYSPKIDGTRTPRDERRRAQHNEVERRRRDKINNWIVQLSKIIPDCNADNSKTGASKGGILSKACDYIRELRQTNQRMQETFKEAERLQMDNELLRQQIEELKNENALLRAQLQQHNLEMVGEGTRQ.

Disordered stretches follow at residues 1–44 and 215–244; these read MDML…PGAE and APRTHPYSPKIDGTRTPRDERRRAQHNEVE. The segment covering 11–20 has biased composition (low complexity); sequence AASATAAAAA. Positions 226–244 are enriched in basic and acidic residues; the sequence is DGTRTPRDERRRAQHNEVE. The 56-residue stretch at 235-290 folds into the bHLH domain; the sequence is RRRAQHNEVERRRRDKINNWIVQLSKIIPDCNADNSKTGASKGGILSKACDYIREL. The interval 307-328 is leucine-zipper; it reads LQMDNELLRQQIEELKNENALL.

In terms of assembly, interacts with MAF. Efficient DNA binding requires dimerization with another bHLH protein. Binds DNA as a homodimer or a heterodimer (USF1/USF2). In vivo, the USF1/USF2A heterodimer represents over 66% of the usf binding activity whereas the USF1 and USF2A homodimers represent less than 10%. The USF1/USF2B heterodimer accounted for almost 15% in some cell. In terms of tissue distribution, ubiquitous.

The protein localises to the nucleus. Its function is as follows. Transcription factor that binds to a symmetrical DNA sequence (E-boxes) (5'-CACGTG-3') that is found in a variety of viral and cellular promoters. The protein is Upstream stimulatory factor 2 (USF2) of Homo sapiens (Human).